The chain runs to 37 residues: Large ribosomal subunit protein bL36c (37 aa).

The protein belongs to the bacterial ribosomal protein bL36 family.

The protein resides in the plastid. It is found in the chloroplast. In Physcomitrium patens (Spreading-leaved earth moss), this protein is Large ribosomal subunit protein bL36c.